The following is a 378-amino-acid chain: Ferrochelatase (378 aa).

Positions 214 and 295 each coordinate Fe cation.

It belongs to the ferrochelatase family.

It localises to the cytoplasm. It catalyses the reaction heme b + 2 H(+) = protoporphyrin IX + Fe(2+). It functions in the pathway porphyrin-containing compound metabolism; protoheme biosynthesis; protoheme from protoporphyrin-IX: step 1/1. Functionally, catalyzes the ferrous insertion into protoporphyrin IX. This is Ferrochelatase from Hydrogenovibrio crunogenus (strain DSM 25203 / XCL-2) (Thiomicrospira crunogena).